We begin with the raw amino-acid sequence, 362 residues long: Molybdenum import ATP-binding protein ModC (362 aa).

Residues 2-236 (VSPIEVRLQM…LDLPLAMGDD (235 aa)) form the ABC transporter domain. 34–41 (GPSGSGKT) provides a ligand contact to ATP. The Mop domain occupies 297–362 (HSSILNRLPV…AQIKAVAVLA (66 aa)).

Belongs to the ABC transporter superfamily. Molybdate importer (TC 3.A.1.8) family. In terms of assembly, the complex is composed of two ATP-binding proteins (ModC), two transmembrane proteins (ModB) and a solute-binding protein (ModA).

The protein localises to the cell inner membrane. It catalyses the reaction molybdate(out) + ATP + H2O = molybdate(in) + ADP + phosphate + H(+). Part of the ABC transporter complex ModABC involved in molybdenum import. Responsible for energy coupling to the transport system. The sequence is that of Molybdenum import ATP-binding protein ModC from Pseudomonas syringae pv. tomato (strain ATCC BAA-871 / DC3000).